The primary structure comprises 922 residues: Probable dipeptidyl-aminopeptidase B (922 aa).

Over residues 1–16 (MATEKGHSRDDEERVP) the composition is skewed to basic and acidic residues. Residues 1–21 (MATEKGHSRDDEERVPLTRGS) are disordered. Over 1–99 (MATEKGHSRD…KPMHKSVKIA (99 aa)) the chain is Cytoplasmic. A helical; Signal-anchor for type II membrane protein membrane pass occupies residues 100 to 120 (LWSLLFLSLGGWSLAFVLFIF). Topologically, residues 121–922 (RSHDTYQTPI…AGLYKFKHLC (802 aa)) are vacuolar. Residues asparagine 135, asparagine 200, asparagine 351, and asparagine 574 are each glycosylated (N-linked (GlcNAc...) asparagine). Serine 756 (charge relay system) is an active-site residue. An N-linked (GlcNAc...) asparagine glycan is attached at asparagine 815. Residues aspartate 833 and histidine 866 each act as charge relay system in the active site. N-linked (GlcNAc...) asparagine glycosylation is present at asparagine 902.

It belongs to the peptidase S9B family.

It localises to the vacuole membrane. The enzyme catalyses Release of an N-terminal dipeptide, Xaa-Yaa-|-Zaa-, from a polypeptide, preferentially when Yaa is Pro, provided Zaa is neither Pro nor hydroxyproline.. Type IV dipeptidyl-peptidase which removes N-terminal dipeptides sequentially from polypeptides having unsubstituted N-termini provided that the penultimate residue is proline. The sequence is that of Probable dipeptidyl-aminopeptidase B (DAPB) from Ajellomyces capsulatus (strain NAm1 / WU24) (Darling's disease fungus).